The sequence spans 147 residues: Small ribosomal subunit protein bS6 (147 aa).

Residues 97-141 (EEGPSAMMRKADRDRERDDRGGGFRGDREGGFRGDRGPRRPREEA) show a composition bias toward basic and acidic residues. The tract at residues 97-147 (EEGPSAMMRKADRDRERDDRGGGFRGDREGGFRGDRGPRRPREEAPAVVEE) is disordered.

Belongs to the bacterial ribosomal protein bS6 family.

Binds together with bS18 to 16S ribosomal RNA. In Nitrobacter hamburgensis (strain DSM 10229 / NCIMB 13809 / X14), this protein is Small ribosomal subunit protein bS6.